The sequence spans 593 residues: ESX-1 secretion system protein EccCb1 (593 aa).

FtsK domains are found at residues arginine 66 to glutamine 260 and glutamine 350 to aspartate 546. Residues glycine 85 to serine 92 and glycine 377 to threonine 384 each bind ATP.

As to quaternary structure, part of the ESX-1 / type VII secretion system (T7SS), which is composed of cytosolic and membrane components. The ESX-1 membrane complex is composed of EccB1, EccCa1, EccCb1, EccD1 and EccE1.

It localises to the cytoplasm. Part of the ESX-1 / type VII specialized secretion system (T7SS), which exports several proteins including EsxA and EsxB. Plays a role in DNA conjugation, in both donor and recipient strains. The chain is ESX-1 secretion system protein EccCb1 from Mycolicibacterium smegmatis (strain ATCC 700084 / mc(2)155) (Mycobacterium smegmatis).